Reading from the N-terminus, the 65-residue chain is Large ribosomal subunit protein bL35 (65 aa).

It belongs to the bacterial ribosomal protein bL35 family.

This Stenotrophomonas maltophilia (strain R551-3) protein is Large ribosomal subunit protein bL35.